We begin with the raw amino-acid sequence, 432 residues long: MSTQMSVFLSHEVAAPQWGEKALVSFNEQGALIHTGESTDLTKIQRAARKFDVQGIKSVVLAGDGWDVEAIWAFHQGYRNPKKYSQLEWVALEEKAQAELEARIKATEFTRDIINKPAEEVAPRQLATMAAEFIRSVAPEGTVTARIVKDKDLLAEGWEGIYAVGRGSDRTSAMLQLDFNPTGDENAPVWACLVGKGITFDSGGYSIKASNFMDSMKADMGGSGTITGGLGLAIMRGLNKRVKLILCCAENMISGRALKLGDVITYKNGKTVEIMNTDAEGRLVLADGLIYASEQNPELIIDCATLTGAAKNALGNDYHALLTFDQALAQEALKSAAEEKEGLWPLPLAEFHREMLPSNFADLSNIGGGDYSPGASTAAAFLSYFVQDYQKGWLHFDCSGTYRKSASDKWSAGATGMGVCTLANLLVEQANK.

The Mn(2+) site is built by lysine 196 and aspartate 201. Lysine 208 is an active-site residue. Mn(2+) contacts are provided by aspartate 219, aspartate 278, and glutamate 280. Residue arginine 282 is part of the active site.

Belongs to the peptidase M17 family. Homohexamer. Requires Mn(2+) as cofactor.

The protein localises to the cytoplasm. The enzyme catalyses Release of an N-terminal amino acid, Xaa, from a peptide or arylamide. Xaa is preferably Glu or Asp but may be other amino acids, including Leu, Met, His, Cys and Gln.. Probably plays an important role in intracellular peptide degradation. This Vibrio vulnificus (strain CMCP6) protein is Peptidase B.